The sequence spans 391 residues: Tryptophan synthase beta chain (391 aa).

Position 86 is an N6-(pyridoxal phosphate)lysine (lysine 86).

The protein belongs to the TrpB family. As to quaternary structure, tetramer of two alpha and two beta chains. It depends on pyridoxal 5'-phosphate as a cofactor.

It carries out the reaction (1S,2R)-1-C-(indol-3-yl)glycerol 3-phosphate + L-serine = D-glyceraldehyde 3-phosphate + L-tryptophan + H2O. Its pathway is amino-acid biosynthesis; L-tryptophan biosynthesis; L-tryptophan from chorismate: step 5/5. Functionally, the beta subunit is responsible for the synthesis of L-tryptophan from indole and L-serine. The chain is Tryptophan synthase beta chain from Vibrio metschnikovii.